Reading from the N-terminus, the 280-residue chain is Aspartate/glutamate leucyltransferase (280 aa).

It belongs to the R-transferase family. Bpt subfamily.

Its subcellular location is the cytoplasm. It catalyses the reaction N-terminal L-glutamyl-[protein] + L-leucyl-tRNA(Leu) = N-terminal L-leucyl-L-glutamyl-[protein] + tRNA(Leu) + H(+). The enzyme catalyses N-terminal L-aspartyl-[protein] + L-leucyl-tRNA(Leu) = N-terminal L-leucyl-L-aspartyl-[protein] + tRNA(Leu) + H(+). In terms of biological role, functions in the N-end rule pathway of protein degradation where it conjugates Leu from its aminoacyl-tRNA to the N-termini of proteins containing an N-terminal aspartate or glutamate. In Cereibacter sphaeroides (strain ATCC 17023 / DSM 158 / JCM 6121 / CCUG 31486 / LMG 2827 / NBRC 12203 / NCIMB 8253 / ATH 2.4.1.) (Rhodobacter sphaeroides), this protein is Aspartate/glutamate leucyltransferase.